An 85-amino-acid chain; its full sequence is U4-theraphotoxin-Hhn1e (85 aa).

Positions 1 to 22 (MKVTLIAILTCAAVLVLHTTAA) are cleaved as a signal peptide. Positions 23–48 (EELEAESQLMEVGMPDTELAAVDEER) are excised as a propeptide. 3 disulfides stabilise this stretch: C52-C66, C56-C77, and C71-C82.

Belongs to the neurotoxin 12 (Hwtx-2) family. 02 (Hwtx-2) subfamily. Expressed by the venom gland.

The protein resides in the secreted. In terms of biological role, postsynaptic neurotoxin. The chain is U4-theraphotoxin-Hhn1e from Cyriopagopus hainanus (Chinese bird spider).